We begin with the raw amino-acid sequence, 88 residues long: Protein WIR1A (88 aa).

Residues Met1 to Pro13 lie on the Cytoplasmic side of the membrane. A helical transmembrane segment spans residues Thr14–Cys35. The Extracellular portion of the chain corresponds to Leu36–Pro88.

It localises to the membrane. Functionally, associated with pathogen defense. This chain is Protein WIR1A (WIR1A), found in Triticum aestivum (Wheat).